Consider the following 618-residue polypeptide: Zinc finger protein 48 (618 aa).

The residue at position 1 (M1) is an N-acetylmethionine. Composition is skewed to basic and acidic residues over residues 1-22 and 39-51; these read MERA…EPQR and EFEH…DLGF. Disordered regions lie at residues 1-51 and 78-109; these read MERA…DLGF and LWVQ…ASSD. Residue K87 forms a Glycyl lysine isopeptide (Lys-Gly) (interchain with G-Cter in SUMO2) linkage. 2 consecutive C2H2-type zinc fingers follow at residues 112-134 and 140-162; these read AVCG…QRTH and YKCG…QRTH. The segment at 157 to 189 is disordered; the sequence is KHQRTHSGEKPYRARPPAQGPPKIPRSRIPAGE. Residue K179 forms a Glycyl lysine isopeptide (Lys-Gly) (interchain with G-Cter in SUMO2) linkage. C2H2-type zinc fingers lie at residues 192–214 and 220–242; these read TICG…QRTH and YKCG…QRTH. The tract at residues 235-271 is disordered; it reads RIKHQRTHRGEQPPRPVVPRRQPSRAATAATQGPKAQ. A Glycyl lysine isopeptide (Lys-Gly) (interchain with G-Cter in SUMO2) cross-link involves residue K269. C2H2-type zinc fingers lie at residues 275-297 and 303-325; these read YICT…QRSH and FGCD…LRVH. K329 is covalently cross-linked (Glycyl lysine isopeptide (Lys-Gly) (interchain with G-Cter in SUMO2)). 2 consecutive C2H2-type zinc fingers follow at residues 331-353 and 359-381; these read YLCP…LRTH and HACP…RLTH. Positions 392–414 are enriched in pro residues; that stretch reads YPLPALIPSPPPPPLGTSPPLTP. Residues 392–457 form a disordered region; it reads YPLPALIPSP…DKPHKCPECG (66 aa). Low complexity predominate over residues 415–432; the sequence is RSPSHSGEPFGLPGLEPE. Residues 451–473 form a C2H2-type 9 zinc finger; sequence HKCPECGKGFRRSSDLVKHHRVH. A Glycyl lysine isopeptide (Lys-Gly) (interchain with G-Cter in SUMO2) cross-link involves residue K477. The segment at 479–501 adopts a C2H2-type 10 zinc-finger fold; the sequence is YLCPECGKGFADSSARVKHLRTH. The interval 500 to 540 is disordered; that stretch reads THRGERARPPPPSTLLRPHNPPGPVPMAPRPRVRAQPSGPS. The span at 508-528 shows a compositional bias: pro residues; sequence PPPPSTLLRPHNPPGPVPMAP. C2H2-type zinc fingers lie at residues 543–565 and 571–593; these read HVCG…RRTH and YKCA…QRGH. Residue K610 forms a Glycyl lysine isopeptide (Lys-Gly) (interchain with G-Cter in SUMO2) linkage.

The protein belongs to the krueppel C2H2-type zinc-finger protein family.

The protein resides in the nucleus. May be involved in transcriptional regulation. This is Zinc finger protein 48 (ZNF48) from Homo sapiens (Human).